A 2671-amino-acid chain; its full sequence is Stalled ribosome sensor GCN1 (2671 aa).

Residue Ala2 is modified to N-acetylalanine. 10 HEAT repeats span residues Asn140–Gly178, Glu257–Ser293, Gln294–Asp331, Cys385–Lys423, Leu425–Leu459, Leu460–Ser500, Ser560–Gly597, Lys599–Thr636, Ala700–Val732, and Leu733–Glu772. A Phosphoserine modification is found at Ser729. Residue Ser786 is modified to Phosphoserine. Residues Gln804–Ile865 are a coiled coil. HEAT repeat units lie at residues Val879–Thr918, Ser979–Leu1016, Leu1035–Gly1072, Phe1078–Ser1115, Asp1155–Arg1192, Tyr1210–Ser1250, Ser1251–Lys1289, Glu1290–Lys1332, Pro1335–Glu1372, Ala1374–Ile1410, Leu1413–Lys1451, Pro1455–Ala1492, His1493–Lys1530, Ser1534–Asn1571, Glu1573–Asp1609, Pro1611–Gln1648, Pro1653–Glu1690, Cys1692–Val1729, Lys1731–Asp1769, Pro1773–Glu1810, Ala1812–Gly1848, Glu1921–Glu1958, Lys1959–Arg1996, Phe2001–His2038, Gln2039–Arg2074, Val2076–His2108, Val2111–Asp2146, Thr2147–Ala2184, Ser2188–Ala2225, Arg2259–Ala2296, Pro2301–Gly2338, Ile2339–Lys2380, Asp2382–Ser2417, Ala2422–Asp2459, Gln2546–Pro2583, Gln2588–Gly2625, and Glu2627–Ser2661. Positions Gly2260–Leu2408 are RWDBD region. Phosphoserine is present on Ser2276.

Belongs to the GCN1 family. In terms of assembly, interacts with EIF2AK4/GCN2; this interaction stimulates the EIF2AK4/GCN2 kinase activity and is impaired by IMPACT upon a variety of stress conditions, such as amino acid depletion, UV-C irradiation, proteasome inhibitor treatment and glucose deprivation. Interacts with IMPACT; this prevents the interaction of GCN1 with EIF2AK4/GCN2 and inhibits EIF2AK4/GCN2 kinase activity. Interacts with RNF14; interaction takes place following ribosome stalling and promotes recruitment of RNF14. In terms of tissue distribution, expressed in the hypothalamus, cortex and hippocampus.

The protein localises to the cytoplasm. In terms of biological role, ribosome collision sensor that plays a key role in the RNF14-RNF25 translation quality control pathway, a pathway that takes place when a ribosome has stalled during translation, and which promotes ubiquitination and degradation of translation factors on stalled ribosomes. Directly binds to the ribosome and acts as a sentinel for colliding ribosomes: activated following ribosome stalling and promotes recruitment of RNF14, which directly ubiquitinates EEF1A1/eEF1A, leading to its degradation. In addition to EEF1A1/eEF1A, the RNF14-RNF25 translation quality control pathway mediates degradation of ETF1/eRF1 and ubiquitination of ribosomal protein. GCN1 also acts as a positive activator of the integrated stress response (ISR) by mediating activation of EIF2AK4/GCN2 in response to amino acid starvation. Interaction with EIF2AK4/GCN2 on translating ribosomes stimulates EIF2AK4/GCN2 kinase activity, leading to phosphorylation of eukaryotic translation initiation factor 2 (eIF-2-alpha/EIF2S1). EIF2S1/eIF-2-alpha phosphorylation converts EIF2S1/eIF-2-alpha into a global protein synthesis inhibitor, leading to a global attenuation of cap-dependent translation, and thus to a reduced overall utilization of amino acids, while concomitantly initiating the preferential translation of ISR-specific mRNAs, such as the transcriptional activator ATF4, and hence allowing ATF4-mediated reprogramming of amino acid biosynthetic gene expression to alleviate nutrient depletion. The polypeptide is Stalled ribosome sensor GCN1 (Mus musculus (Mouse)).